A 201-amino-acid chain; its full sequence is MDKFTTLEGVAAPLKIINVDTDMIIPKQFLKTIKRTGLGKGLFSEQRYKDDGSENPDFILNKPAYRNAKILVAGDNFGCGSSREHAPWALLDFGIRCVISTSFGDIFYNNCFKNGVLPIRVTQADLDKLFDDAERGANATITIDLGKQEIRGPDGGTVKFDIDPFRKHCLMNGLDDIGLTLEKKASIDSYEDKAKTERAWA.

The protein belongs to the LeuD family. LeuD type 1 subfamily. In terms of assembly, heterodimer of LeuC and LeuD.

It carries out the reaction (2R,3S)-3-isopropylmalate = (2S)-2-isopropylmalate. Its pathway is amino-acid biosynthesis; L-leucine biosynthesis; L-leucine from 3-methyl-2-oxobutanoate: step 2/4. Its function is as follows. Catalyzes the isomerization between 2-isopropylmalate and 3-isopropylmalate, via the formation of 2-isopropylmaleate. The chain is 3-isopropylmalate dehydratase small subunit from Rhodopseudomonas palustris (strain BisB18).